A 424-amino-acid polypeptide reads, in one-letter code: Dihydroorotase (424 aa).

Residues H60 and H62 each contribute to the Zn(2+) site. Residues 62 to 64 and N94 contribute to the substrate site; that span reads HFR. Zn(2+)-binding residues include D151, H178, and H231. N277 lines the substrate pocket. A Zn(2+)-binding site is contributed by D304. The active site involves D304. H308 is a substrate binding site.

Belongs to the metallo-dependent hydrolases superfamily. DHOase family. Class I DHOase subfamily. Requires Zn(2+) as cofactor.

The catalysed reaction is (S)-dihydroorotate + H2O = N-carbamoyl-L-aspartate + H(+). Its pathway is pyrimidine metabolism; UMP biosynthesis via de novo pathway; (S)-dihydroorotate from bicarbonate: step 3/3. Functionally, catalyzes the reversible cyclization of carbamoyl aspartate to dihydroorotate. The chain is Dihydroorotase from Clostridium acetobutylicum (strain ATCC 824 / DSM 792 / JCM 1419 / IAM 19013 / LMG 5710 / NBRC 13948 / NRRL B-527 / VKM B-1787 / 2291 / W).